The chain runs to 228 residues: Small ribosomal subunit protein uS3 (228 aa).

In terms of domain architecture, KH type-2 spans 39-107; sequence VREYLQDKLK…PVHINIEEIR (69 aa).

Belongs to the universal ribosomal protein uS3 family. In terms of assembly, part of the 30S ribosomal subunit. Forms a tight complex with proteins S10 and S14.

Its function is as follows. Binds the lower part of the 30S subunit head. Binds mRNA in the 70S ribosome, positioning it for translation. In Pseudomonas fluorescens (strain ATCC BAA-477 / NRRL B-23932 / Pf-5), this protein is Small ribosomal subunit protein uS3.